Consider the following 100-residue polypeptide: Putative antiporter subunit mnhF2 (100 aa).

A run of 3 helical transmembrane segments spans residues 5–25 (ITHIMIISSLIIFGIALIICL), 38–60 (VVTFDTTSAVVMSIVGVLSVLMG), and 70–92 (LIAIISFVSSVSISRFIGGGHVF).

It belongs to the CPA3 antiporters (TC 2.A.63) subunit F family. In terms of assembly, may form a heterooligomeric complex that consists of seven subunits: mnhA2, mnhB2, mnhC2, mnhD2, mnhE2, mnhF2 and mnhG2.

The protein localises to the cell membrane. In Staphylococcus aureus (strain USA300), this protein is Putative antiporter subunit mnhF2 (mnhF2).